The primary structure comprises 157 residues: Succinate dehydrogenase [ubiquinone] cytochrome b small subunit, mitochondrial (157 aa).

Residues 1 to 45 (MAALVLLRAGLARPRGVPTALLRGTLLRHSAVLTAAADRSAPARQ) constitute a mitochondrion transit peptide. Residues 46–61 (SHGGAPQGHGSSKAAS) are Mitochondrial matrix-facing. The chain crosses the membrane as a helical span at residues 62-83 (LHWTSERAVSALLLGLLPAAYL). The Mitochondrial intermembrane segment spans residues 84-88 (YPGPA). Residues 89-109 (VDYSLAAALTLHGHWGLGQVI) form a helical membrane-spanning segment. Residue His100 coordinates heme b. The Mitochondrial matrix segment spans residues 110–118 (TDYVHGDTP). Tyr112 is a binding site for a ubiquinone. Residues 119 to 140 (IKVANTGLYVLSAITFTGLCYF) traverse the membrane as a helical segment. Topologically, residues 141 to 157 (NYYDVGICKAVAMLWSI) are mitochondrial intermembrane.

Belongs to the CybS family. As to quaternary structure, component of complex II composed of four subunits: the flavoprotein (FP) SDHA, iron-sulfur protein (IP) SDHB, and a cytochrome b560 composed of SDHC and SDHD.

It is found in the mitochondrion inner membrane. It participates in carbohydrate metabolism; tricarboxylic acid cycle. Its function is as follows. Membrane-anchoring subunit of succinate dehydrogenase (SDH) that is involved in complex II of the mitochondrial electron transport chain and is responsible for transferring electrons from succinate to ubiquinone (coenzyme Q). SDH also oxidizes malate to the non-canonical enol form of oxaloacetate, enol-oxaloacetate. Enol-oxaloacetate, which is a potent inhibitor of the succinate dehydrogenase activity, is further isomerized into keto-oxaloacetate. The chain is Succinate dehydrogenase [ubiquinone] cytochrome b small subunit, mitochondrial (SDHD) from Gallus gallus (Chicken).